The following is a 243-amino-acid chain: Protein DMP8 (243 aa).

Residues 1 to 37 form a disordered region; it reads MEKTEESVGIRVYTTTTTQNPSPTSSRSPKPVPLSSL. A compositionally biased stretch (low complexity) spans 14–29; sequence TTTTTQNPSPTSSRSP. 4 helical membrane-spanning segments follow: residues 70-90, 98-118, 174-194, and 212-232; these read MLVN…LPTI, GINT…CFFF, VNDF…AFSD, and VMES…LVFP.

This sequence belongs to the plant DMP1 protein family. Restricted to flowers.

It is found in the endoplasmic reticulum membrane. The protein localises to the vacuole membrane. In terms of biological role, involved in membrane remodeling. The protein is Protein DMP8 of Arabidopsis thaliana (Mouse-ear cress).